We begin with the raw amino-acid sequence, 729 residues long: E3 ubiquitin-protein ligase SH3RF2 (729 aa).

The RING-type zinc finger occupies 12-53 (CPVCFEKLDVTAKVLPCQHTFCKPCLQRVFKAHKELRCPECR). A disordered region spans residues 78–105 (SGQSSGRGGSFRRPGTMTLQDGRKSRTN). 2 SH3 domains span residues 125–184 (DGVP…VIKQ) and 187–252 (QPPP…PNLT). The tract at residues 258–297 (EKNKGRQSSRTKNLSLVSSSSRGNTSTLRRGPGSRRKVPG) is disordered. Polar residues predominate over residues 263 to 285 (RQSSRTKNLSLVSSSSRGNTSTL). The tract at residues 370–459 (VVSLPGSQQH…RSPGLYTTWT (90 aa)) is interaction with PAK4. One can recognise an SH3 3 domain in the interval 380–441 (LSANMFVALH…PNNYVIPIFR (62 aa)). 2 disordered regions span residues 497 to 526 (STAG…QRPL) and 610 to 677 (KSEP…SQPE). Residues 517–526 (RKNGSLQRPL) show a composition bias toward polar residues. Residues 641 to 646 (KTVRFQ) are interaction with PPP1CA. Phosphoserine is present on serine 649.

Belongs to the SH3RF family. In terms of assembly, interacts with FASLG and PPP1CA. Interacts with PAK4 and TNFRSF1A. Interacts with DLK1, MAP3K10/MLK2, MAPK8IP1/JIP1, MAPK8IP2/JIP2 and MAPK8IP3/JIP3. Interacts with RAC1 (both active GTP- or inactive GDP-bound forms). In terms of processing, autoubiquitinated. Heart (at protein level). Up-regulated in colon cancer tissues as compared to normal colon tissues (at protein level). Testis. In the heart, present in the apex, left atrium, right atrium, left ventricle and right ventricle, but not in the aorta.

It localises to the nucleus. The catalysed reaction is S-ubiquitinyl-[E2 ubiquitin-conjugating enzyme]-L-cysteine + [acceptor protein]-L-lysine = [E2 ubiquitin-conjugating enzyme]-L-cysteine + N(6)-ubiquitinyl-[acceptor protein]-L-lysine.. It functions in the pathway protein modification; protein ubiquitination. In terms of biological role, has E3 ubiquitin-protein ligase activity. Acts as an anti-apoptotic regulator of the JNK pathway by ubiquitinating and promoting the degradation of SH3RF1, a scaffold protein that is required for pro-apoptotic JNK activation. Facilitates TNF-alpha-mediated recruitment of adapter proteins TRADD and RIPK1 to TNFRSF1A and regulates PAK4 protein stability via inhibition of its ubiquitin-mediated proteasomal degradation. Inhibits PPP1CA phosphatase activity. The chain is E3 ubiquitin-protein ligase SH3RF2 (SH3RF2) from Homo sapiens (Human).